The primary structure comprises 560 residues: Diphtheria toxin homolog CRM228 (560 aa).

The N-terminal stretch at 1 to 25 (MSRKLFASILIGALLGIGAPPSAHA) is a signal peptide. The NAD(+) site is built by histidine 46 and tyrosine 90. Residue glutamate 173 is part of the active site. 2 cysteine pairs are disulfide-bonded: cysteine 211–cysteine 226 and cysteine 486–cysteine 496.

This is Diphtheria toxin homolog CRM228 from Corynebacterium diphtheriae.